Here is a 509-residue protein sequence, read N- to C-terminus: MEEIQRYLQPDRSQQHNFLYPLIFQEYIYALAHDHGLNRNRSILLENPGYNNKLSFLIVKRLITRMYQQNHFLISTNDSNKNSFLGCNKSLYSQMISEGFAFIVEIPFSLRLISSLSSFEGKKIFKSHNLRSIHSTFPFLEDNFSHLNYVLDILIPYPVHLEILVQTLRYWVKDASSLHLLRFFLHEYWNLNSLITSKKPGYSFSKKNQRFFFFLYNSYVYECESTFVFLRNQSSHLRSTSFGALLERIYFYGKIERLVEVFAKDFQVTLWLFKDPFMHYVRYQGKSILASKGTFLLMNKWKFYLVNFWQCHFYLCFHTGRIHINQLSNHSRDFMGYLSSVRLNPSMVRSQMLENSFLINNAIKKFDTLVPIIPLIGSLAKGNFCTVLGHPISKPVWSDLSDSDIIDRFGRICRNLFHYYSGSSKKKTLYRIKYILRLSCARTLARKHKSTVRTFLKRSGSELLEEFLTSEEQVLSLTFPRASSSLWGVYRSRIWYLDIFCINDLANYQ.

The protein belongs to the intron maturase 2 family. MatK subfamily.

Its subcellular location is the plastid. It is found in the chloroplast. Its function is as follows. Usually encoded in the trnK tRNA gene intron. Probably assists in splicing its own and other chloroplast group II introns. This is Maturase K from Nicotiana acuminata (Acuminate tobacco).